Here is a 131-residue protein sequence, read N- to C-terminus: Small ribosomal subunit protein uS8 (131 aa).

This sequence belongs to the universal ribosomal protein uS8 family. Part of the 30S ribosomal subunit. Contacts proteins S5 and S12.

Its function is as follows. One of the primary rRNA binding proteins, it binds directly to 16S rRNA central domain where it helps coordinate assembly of the platform of the 30S subunit. In Laribacter hongkongensis (strain HLHK9), this protein is Small ribosomal subunit protein uS8.